The chain runs to 701 residues: Elongation factor G 2 (701 aa).

Positions 8–290 (NRYRNIGIVA…AVIEFLPAPA (283 aa)) constitute a tr-type G domain. GTP-binding positions include 17–24 (AHVDAGKT), 88–92 (DTPGH), and 142–145 (NKMD).

Belongs to the TRAFAC class translation factor GTPase superfamily. Classic translation factor GTPase family. EF-G/EF-2 subfamily.

The protein resides in the cytoplasm. Catalyzes the GTP-dependent ribosomal translocation step during translation elongation. During this step, the ribosome changes from the pre-translocational (PRE) to the post-translocational (POST) state as the newly formed A-site-bound peptidyl-tRNA and P-site-bound deacylated tRNA move to the P and E sites, respectively. Catalyzes the coordinated movement of the two tRNA molecules, the mRNA and conformational changes in the ribosome. The protein is Elongation factor G 2 of Pseudoalteromonas atlantica (strain T6c / ATCC BAA-1087).